The primary structure comprises 59 residues: DNA gyrase inhibitor YacG (59 aa).

Residues cysteine 7, cysteine 10, cysteine 25, and cysteine 29 each coordinate Zn(2+).

Belongs to the DNA gyrase inhibitor YacG family. Interacts with GyrB. Zn(2+) is required as a cofactor.

Functionally, inhibits all the catalytic activities of DNA gyrase by preventing its interaction with DNA. Acts by binding directly to the C-terminal domain of GyrB, which probably disrupts DNA binding by the gyrase. This chain is DNA gyrase inhibitor YacG, found in Geobacter sulfurreducens (strain ATCC 51573 / DSM 12127 / PCA).